The chain runs to 224 residues: Urease accessory protein UreF (224 aa).

This sequence belongs to the UreF family. As to quaternary structure, ureD, UreF and UreG form a complex that acts as a GTP-hydrolysis-dependent molecular chaperone, activating the urease apoprotein by helping to assemble the nickel containing metallocenter of UreC. The UreE protein probably delivers the nickel.

It is found in the cytoplasm. Functionally, required for maturation of urease via the functional incorporation of the urease nickel metallocenter. This chain is Urease accessory protein UreF, found in Pseudomonas putida (strain GB-1).